Reading from the N-terminus, the 145-residue chain is Small ribosomal subunit protein eS19 (145 aa).

The tract at residues 120-145 is disordered; sequence GGRRISENGQRDLDRIAAQTLEEDDE. The segment covering 123–134 has biased composition (basic and acidic residues); that stretch reads RISENGQRDLDR.

Belongs to the eukaryotic ribosomal protein eS19 family. Component of the small ribosomal subunit. Mature ribosomes consist of a small (40S) and a large (60S) subunit. The 40S subunit contains about 32 different proteins and 1 molecule of RNA (18S). The 60S subunit contains 45 different proteins and 3 molecules of RNA (25S, 5.8S and 5S).

Its subcellular location is the cytoplasm. Component of the ribosome, a large ribonucleoprotein complex responsible for the synthesis of proteins in the cell. The small ribosomal subunit (SSU) binds messenger RNAs (mRNAs) and translates the encoded message by selecting cognate aminoacyl-transfer RNA (tRNA) molecules. The large subunit (LSU) contains the ribosomal catalytic site termed the peptidyl transferase center (PTC), which catalyzes the formation of peptide bonds, thereby polymerizing the amino acids delivered by tRNAs into a polypeptide chain. The nascent polypeptides leave the ribosome through a tunnel in the LSU and interact with protein factors that function in enzymatic processing, targeting, and the membrane insertion of nascent chains at the exit of the ribosomal tunnel. RPS19A is required for proper maturation of the small (40S) ribosomal subunit. The polypeptide is Small ribosomal subunit protein eS19 (RPS19A) (Candida albicans (strain SC5314 / ATCC MYA-2876) (Yeast)).